A 177-amino-acid chain; its full sequence is Large ribosomal subunit protein uL6 (177 aa).

Residues 152 to 171 (RPPEPYKGKGVRYDDEEVRR) show a composition bias toward basic and acidic residues. The tract at residues 152-177 (RPPEPYKGKGVRYDDEEVRRKEAKKK) is disordered.

Belongs to the universal ribosomal protein uL6 family. In terms of assembly, part of the 50S ribosomal subunit.

In terms of biological role, this protein binds to the 23S rRNA, and is important in its secondary structure. It is located near the subunit interface in the base of the L7/L12 stalk, and near the tRNA binding site of the peptidyltransferase center. The sequence is that of Large ribosomal subunit protein uL6 from Shewanella sp. (strain ANA-3).